Consider the following 264-residue polypeptide: 3-methyl-2-oxobutanoate hydroxymethyltransferase (264 aa).

Residues D45 and D84 each contribute to the Mg(2+) site. Residues 45–46 (DS), D84, and K112 each bind 3-methyl-2-oxobutanoate. E114 lines the Mg(2+) pocket. The active-site Proton acceptor is E181.

It belongs to the PanB family. Homodecamer; pentamer of dimers. The cofactor is Mg(2+).

The protein resides in the cytoplasm. It carries out the reaction 3-methyl-2-oxobutanoate + (6R)-5,10-methylene-5,6,7,8-tetrahydrofolate + H2O = 2-dehydropantoate + (6S)-5,6,7,8-tetrahydrofolate. Its pathway is cofactor biosynthesis; (R)-pantothenate biosynthesis; (R)-pantoate from 3-methyl-2-oxobutanoate: step 1/2. Catalyzes the reversible reaction in which hydroxymethyl group from 5,10-methylenetetrahydrofolate is transferred onto alpha-ketoisovalerate to form ketopantoate. The polypeptide is 3-methyl-2-oxobutanoate hydroxymethyltransferase (Shewanella frigidimarina (strain NCIMB 400)).